A 148-amino-acid polypeptide reads, in one-letter code: UPF0756 membrane protein NGK_2061 (148 aa).

4 consecutive transmembrane segments (helical) span residues 10–32, 50–70, 85–105, and 116–136; these read LVTL…ATIL, HGLN…LVSG, MISA…GVPL, and LLIG…GPLI.

It belongs to the UPF0756 family.

The protein resides in the cell membrane. This is UPF0756 membrane protein NGK_2061 from Neisseria gonorrhoeae (strain NCCP11945).